The sequence spans 357 residues: Alanine racemase (357 aa).

The active-site Proton acceptor; specific for D-alanine is the K35. An N6-(pyridoxal phosphate)lysine modification is found at K35. A substrate-binding site is contributed by R128. Residue Y254 is the Proton acceptor; specific for L-alanine of the active site. M302 serves as a coordination point for substrate.

The protein belongs to the alanine racemase family. Pyridoxal 5'-phosphate serves as cofactor.

It catalyses the reaction L-alanine = D-alanine. It functions in the pathway amino-acid biosynthesis; D-alanine biosynthesis; D-alanine from L-alanine: step 1/1. Functionally, catalyzes the interconversion of L-alanine and D-alanine. May also act on other amino acids. This Marinobacter nauticus (strain ATCC 700491 / DSM 11845 / VT8) (Marinobacter aquaeolei) protein is Alanine racemase (alr).